A 217-amino-acid polypeptide reads, in one-letter code: Large ribosomal subunit protein uL3 (217 aa).

It belongs to the universal ribosomal protein uL3 family. Part of the 50S ribosomal subunit. Forms a cluster with proteins L14 and L19.

One of the primary rRNA binding proteins, it binds directly near the 3'-end of the 23S rRNA, where it nucleates assembly of the 50S subunit. This is Large ribosomal subunit protein uL3 from Brachyspira hyodysenteriae (strain ATCC 49526 / WA1).